Reading from the N-terminus, the 189-residue chain is Movement protein (189 aa).

This sequence belongs to the tombusvirus/aureusvirus movement protein p22 family.

The protein localises to the host membrane. Its function is as follows. Transports viral genome to neighboring plant cells directly through plasmosdesmata, without any budding. The movement protein allows efficient cell to cell propagation, by bypassing the host cell wall barrier. This is Movement protein from Cymbidium ringspot virus (CymRSV).